The primary structure comprises 250 residues: Probable transcriptional regulatory protein DP2908 (250 aa).

Belongs to the TACO1 family.

The protein localises to the cytoplasm. The polypeptide is Probable transcriptional regulatory protein DP2908 (Desulfotalea psychrophila (strain LSv54 / DSM 12343)).